Reading from the N-terminus, the 349-residue chain is tRNA pseudouridine synthase D (349 aa).

The Nucleophile role is filled by D77. One can recognise a TRUD domain in the interval 151-309 (GVPNYFGEQR…ETIDESTLKL (159 aa)).

It belongs to the pseudouridine synthase TruD family.

It carries out the reaction uridine(13) in tRNA = pseudouridine(13) in tRNA. Responsible for synthesis of pseudouridine from uracil-13 in transfer RNAs. This is tRNA pseudouridine synthase D from Pseudoalteromonas translucida (strain TAC 125).